We begin with the raw amino-acid sequence, 128 residues long: Cyclic ether formation enzyme gkaZ (128 aa).

An N-terminal signal peptide occupies residues 1–36 (MTTARALSDGLAYLLACFNAFCIQAHLTSRFSPAFS). 2 helical membrane passes run 61–81 (LRYMFVSLNAGLGLLLALPGW) and 107–127 (WLLHFLSHLVLLSITMAAIYV).

Belongs to the cyclic ether formation enzyme xenC family.

The protein localises to the membrane. The protein operates within mycotoxin biosynthesis. Functionally, cyclic ether formation enzyme; part of the gene cluster that mediates the biosynthesis of GKK1032, fungal natural products containing a macrocyclic para-cyclophane connected to a decahydrofluorene ring system that show potent antitumor activities. Within the pathway, gkaZ functions synergistically with gkaB and gkaX to form the cyclophane. The pathway begins with the PKS-NRPS gkaA which, with the help of the trans-enoyl reductase gkaC, synthesizes the polyketide-tyrosyl acyl thioester product which can be reductively off-loaded by the terminal reductase (R) domain in gkaA. The alpha/beta hydrolase gkaG is then required to catalyze the subsequent Knoevenagel condensation that affords the 3-pyrrolin-2-one ring, whereas the three proteins gkaB, gkaX and gkaZ then function synergistically to form the cyclophane. The protein is Cyclic ether formation enzyme gkaZ of Penicillium citrinum.